The primary structure comprises 520 residues: MSVDIHSEKILILDFGSQYTQLIARRVREAHVYCELHPFDLELAAIRSFAPSGIILSGGPKSVYEEGAPAVAEELFELGVPVLGICYGMQLMSRHFGGEVVPAGKREFGHAELLAQGTPGPLFDGFFLDGKSPVWMSHGDHVSQVPEGFQVAAGTANAPVCAIQNLACNLYGVQFHPEVNHTPRGEQLIDTFVRKICGCSGKWTPGQIIEDAVARIKQQVGSDRVILGLSGGVDSSVAAALIHRAIGEQLTCVFVDNGLLRLGEGDQVMATFAQNLGVKVIRVDAEDRFLSALAGVSDPEKKRKIIGGLFVEIFEEESNKITDARWLAQGTIYPDVIESAGAKTGKAHNIKSHHNVGGLPEHMKLKLLEPLRELFKDEVRAIGEELGLPHQMVWRHPFPGPGLGVRILGEVRKDYADILRQADAIYIEELYAADHYHKISQAFAVFLPVKSVGVMGDGRTYEYVVALRAVETKDFMTAGWYPLPYEDLARISSRIINEVKGINRVVYDISSKPPATIEWE.

Positions 9–202 (KILILDFGSQ…VRKICGCSGK (194 aa)) constitute a Glutamine amidotransferase type-1 domain. Cys-86 (nucleophile) is an active-site residue. Residues His-176 and Glu-178 contribute to the active site. One can recognise a GMPS ATP-PPase domain in the interval 203–395 (WTPGQIIEDA…LGLPHQMVWR (193 aa)). Residue 230-236 (SGGVDSS) participates in ATP binding.

In terms of assembly, homodimer.

It carries out the reaction XMP + L-glutamine + ATP + H2O = GMP + L-glutamate + AMP + diphosphate + 2 H(+). It participates in purine metabolism; GMP biosynthesis; GMP from XMP (L-Gln route): step 1/1. Functionally, catalyzes the synthesis of GMP from XMP. The chain is GMP synthase [glutamine-hydrolyzing] from Geotalea daltonii (strain DSM 22248 / JCM 15807 / FRC-32) (Geobacter daltonii).